The following is an 838-amino-acid chain: Xyloglucanase (838 aa).

An N-terminal signal peptide occupies residues 1-19; the sequence is MKVSRVLALVLGAVIPAHA. The Nucleophile role is filled by D53. N232 and N436 each carry an N-linked (GlcNAc...) asparagine glycan. Residue D469 is the Proton donor of the active site. The interval 750-801 is disordered; sequence GTGGTSSSTKQSSSSTSSASSSTTLRSSVVSTTRASTVTSSRTSSAAGPTGS. The segment covering 754–797 has biased composition (low complexity); it reads TSSSTKQSSSSTSSASSSTTLRSSVVSTTRASTVTSSRTSSAAG. One can recognise a CBM1 domain in the interval 802–838; it reads GVAGHYAQCGGIGWTGPTQCVAPYVCQKQNDYYYQCV.

The protein belongs to the glycosyl hydrolase 74 family.

The catalysed reaction is Hydrolysis of (1-&gt;4)-D-glucosidic linkages in xyloglucans so as to successively remove oligosaccharides from the newly-formed chain end after endo-initiation on a polymer molecule.. Hydrolyzes the glucosidic bonds of unbranched Glc residues in tamarind seed xyloglucan, producing XXXG, XLXG, XXLG and XLLG. Has a low activity against beta-glucan and carboxymethylcellulose. Not active against Avicel, laminarin, xylan, galactomannan, linear and branched arabinans, galactan, polygalacturonic acid, starch, beta-D-Glcp, beta-D-cellobiose, beta-D-Galp, beta-D-Xylp, alpha-D-Xylp, alpha-L-Araf and alpha-L-Arap. The polypeptide is Xyloglucanase (Hypocrea jecorina (strain QM6a) (Trichoderma reesei)).